The primary structure comprises 485 residues: E3 ubiquitin-protein ligase TRIM68 (485 aa).

The RING-type zinc-finger motif lies at 16 to 61; it reads CPICMTFLREPMSIDCGHSFCHSCLSGLWEIPGESQNWGYTCPLCR. A B box-type zinc finger spans residues 93–134; that stretch reads LKGDLCERHGEKLKMFCKEDVLIMCEACSQSPEHEAHSVVPM. Positions 98, 101, 120, and 126 each coordinate Zn(2+). A coiled-coil region spans residues 207–239; it reads AEVAAALASLQREAAETMQKLELNHSELIQQSQ. A B30.2/SPRY domain is found at 285–481; it reads LKTDCRVLGL…NTAPLAICSL (197 aa).

It belongs to the TRIM/RBCC family. Interacts with AR/androgen receptor (via ligand-binding domain). Interacts with KAT5/TIP60. In terms of processing, auto-ubiquitinated. As to expression, widely expressed. Expressed at high levels in prostate cancer cell lines. Up-regulation could be restricted to androgen-dependent cells.

It localises to the cytoplasm. The protein localises to the perinuclear region. The protein resides in the nucleus. The enzyme catalyses S-ubiquitinyl-[E2 ubiquitin-conjugating enzyme]-L-cysteine + [acceptor protein]-L-lysine = [E2 ubiquitin-conjugating enzyme]-L-cysteine + N(6)-ubiquitinyl-[acceptor protein]-L-lysine.. Its pathway is protein modification; protein ubiquitination. In terms of biological role, functions as a ubiquitin E3 ligase. Acts as a coactivator of androgen receptor (AR) depending on its ubiquitin ligase activity. This chain is E3 ubiquitin-protein ligase TRIM68 (TRIM68), found in Homo sapiens (Human).